The primary structure comprises 328 residues: Putative glycosyltransferase 41 (328 aa).

It belongs to the glycosyltransferase group 1 family. Glycosyltransferase 4 subfamily.

The protein is Putative glycosyltransferase 41 (SIFV0041) of Sulfolobus islandicus filamentous virus (isolate Iceland/Hveragerdi) (SIFV).